A 642-amino-acid chain; its full sequence is G protein-coupled receptor kinase 1 (642 aa).

The N-terminal stretch occupies residues 1–202 (MEIENIVANT…LEKRPVDKHT (202 aa)). The 137-residue stretch at 52–188 (YAFVVEKQPI…AESMYFHRFL (137 aa)) folds into the RGS domain. The Protein kinase domain maps to 203–470 (FRLYRVLGKG…AEEIRAHPFF (268 aa)). ATP is bound by residues 209-217 (LGKGGFGEV) and Lys-232. Residue Asp-328 is the Proton acceptor of the active site. The region spanning 480-545 (EPVPWKKMEA…GCVSIPWQSE (66 aa)) is the AGC-kinase C-terminal domain. The disordered stretch occupies residues 612 to 642 (VEQQQPPKTSTQTPAVRSSRAASASGRTLVI). Residues 614–636 (QQQPPKTSTQTPAVRSSRAASAS) show a composition bias toward low complexity.

It belongs to the protein kinase superfamily. AGC Ser/Thr protein kinase family. GPRK subfamily.

It catalyses the reaction [G-protein-coupled receptor] + ATP = [G-protein-coupled receptor]-phosphate + ADP + H(+). Specifically phosphorylates the activated forms of G protein-coupled receptors. The polypeptide is G protein-coupled receptor kinase 1 (grk-1) (Caenorhabditis elegans).